Consider the following 131-residue polypeptide: Profilin-A (131 aa).

This sequence belongs to the profilin family. In terms of assembly, occurs in many kinds of cells as a complex with monomeric actin in a 1:1 ratio.

The protein resides in the cytoplasm. The protein localises to the cytoskeleton. Functionally, binds to actin and affects the structure of the cytoskeleton. At high concentrations, profilin prevents the polymerization of actin, whereas it enhances it at low concentrations. By binding to PIP2, it inhibits the formation of IP3 and DG. May serve as a modulator in pollen germination and pollen tube growth. The chain is Profilin-A from Oryza sativa subsp. japonica (Rice).